Here is a 375-residue protein sequence, read N- to C-terminus: 23S rRNA (uracil(747)-C(5))-methyltransferase RlmC (375 aa).

Positions 3, 11, 14, and 87 each coordinate [4Fe-4S] cluster. Positions 212, 241, 262, and 307 each coordinate S-adenosyl-L-methionine. The active-site Nucleophile is the Cys334.

It belongs to the class I-like SAM-binding methyltransferase superfamily. RNA M5U methyltransferase family. RlmC subfamily.

It carries out the reaction uridine(747) in 23S rRNA + S-adenosyl-L-methionine = 5-methyluridine(747) in 23S rRNA + S-adenosyl-L-homocysteine + H(+). Functionally, catalyzes the formation of 5-methyl-uridine at position 747 (m5U747) in 23S rRNA. This Escherichia coli (strain SE11) protein is 23S rRNA (uracil(747)-C(5))-methyltransferase RlmC.